The sequence spans 355 residues: MAITKYKAAAVTSEPGWFDLEGGVRKTIDFINEAGEAGCKFVAFPEVWIPGYPYWMWKVTYLQSLPMLKRYRENSMAVDSEEMRRIRRAARDNQIFVSLGFSEIDHATLYLSQVLIGPDGAVINHRRKIKPTHVEKLVYGDGSGDTFMSVSETEIGRVGQLNCWENMNPFLKSLNVSAGEQVHVAAWPVYPGKERQVHPDPATNYADPASDLVTPEYAIETGTWTLAPFQRLSVEGLKINTPEGVEPETDPSVYNGHARIYRPDGSLVVKPEKDFDGLLFVDIDLNECHLTKVLADFAGHYMRPDLIRLLVDTRRKKLITEADPNGSIATYSTRQRLGLDKPLSKKEGDETTDVL.

The CN hydrolase domain maps to 6 to 286; the sequence is YKAAAVTSEP…GLLFVDIDLN (281 aa). Residue Glu-46 is the Proton acceptor of the active site. Lys-128 is an active-site residue. The active-site Nucleophile is the Cys-163.

This sequence belongs to the carbon-nitrogen hydrolase superfamily. Nitrilase family. Oligomer of dimers, forming left-handed helical fibers.

The enzyme catalyses formamide = hydrogen cyanide + H2O. Functionally, catalyzes the hydration of cyanide to formamide. Degradation of cyanide may be important for plant pathogenic fungi in infection of cyanogenic plants. Also has low but significant nitrilase activity with acetonitrile, propionitrile and benzonitrile. In Gibberella baccata (Fusarium lateritium), this protein is Cyanide hydratase.